The following is a 44-amino-acid chain: METPALVATVFVSCLVLSITGYSLYIGFGPPSKELRDPFDEHED.

The chain crosses the membrane as a helical span at residues 7 to 29 (VATVFVSCLVLSITGYSLYIGFG).

It belongs to the PsbN family.

It is found in the plastid. It localises to the chloroplast thylakoid membrane. In terms of biological role, may play a role in photosystem I and II biogenesis. This chain is Protein PsbN, found in Nephroselmis olivacea (Green alga).